The following is a 468-amino-acid chain: Cysteine--tRNA ligase (468 aa).

C29 is a binding site for Zn(2+). The 'HIGH' region signature appears at 31 to 41; that stretch reads PTVYNYIHIGN. C209, H234, and E238 together coordinate Zn(2+). The short motif at 266–270 is the 'KMSKS' region element; the sequence is KMSKS. K269 contributes to the ATP binding site. At S270 the chain carries Phosphoserine.

It belongs to the class-I aminoacyl-tRNA synthetase family. In terms of assembly, monomer. The cofactor is Zn(2+).

It is found in the cytoplasm. The enzyme catalyses tRNA(Cys) + L-cysteine + ATP = L-cysteinyl-tRNA(Cys) + AMP + diphosphate. The protein is Cysteine--tRNA ligase of Oceanobacillus iheyensis (strain DSM 14371 / CIP 107618 / JCM 11309 / KCTC 3954 / HTE831).